We begin with the raw amino-acid sequence, 90 residues long: Antitoxin VapB35 (90 aa).

Residues 53–90 form a disordered region; the sequence is GSVQPARVHGPAPRPTIPMRGGLDSGTLLERMRAEERY.

This sequence belongs to the phD/YefM antitoxin family.

Antitoxin component of a type II toxin-antitoxin (TA) system. Neutralizes the effect of cognate toxin VapC35. This Mycobacterium tuberculosis (strain CDC 1551 / Oshkosh) protein is Antitoxin VapB35 (vapB35).